The primary structure comprises 645 residues: Translation factor GUF1, mitochondrial (645 aa).

Positions 44–228 constitute a tr-type G domain; it reads ENYRNFSIVA…AIIDRIPPPT (185 aa). GTP is bound by residues 53-60, 120-124, and 174-177; these read AHVDHGKS, DTPGH, and NKID.

This sequence belongs to the TRAFAC class translation factor GTPase superfamily. Classic translation factor GTPase family. LepA subfamily.

It is found in the mitochondrion inner membrane. The enzyme catalyses GTP + H2O = GDP + phosphate + H(+). Promotes mitochondrial protein synthesis. May act as a fidelity factor of the translation reaction, by catalyzing a one-codon backward translocation of tRNAs on improperly translocated ribosomes. Binds to mitochondrial ribosomes in a GTP-dependent manner. This chain is Translation factor GUF1, mitochondrial, found in Saccharomyces cerevisiae (strain ATCC 204508 / S288c) (Baker's yeast).